Here is a 430-residue protein sequence, read N- to C-terminus: Enolase (430 aa).

Glutamine 167 provides a ligand contact to (2R)-2-phosphoglycerate. Glutamate 209 serves as the catalytic Proton donor. The Mg(2+) site is built by aspartate 246, glutamate 289, and aspartate 316. Lysine 341, arginine 370, serine 371, and lysine 392 together coordinate (2R)-2-phosphoglycerate. The Proton acceptor role is filled by lysine 341.

Belongs to the enolase family. In terms of assembly, component of the RNA degradosome, a multiprotein complex involved in RNA processing and mRNA degradation. It depends on Mg(2+) as a cofactor.

Its subcellular location is the cytoplasm. It localises to the secreted. It is found in the cell surface. It carries out the reaction (2R)-2-phosphoglycerate = phosphoenolpyruvate + H2O. It participates in carbohydrate degradation; glycolysis; pyruvate from D-glyceraldehyde 3-phosphate: step 4/5. Functionally, catalyzes the reversible conversion of 2-phosphoglycerate (2-PG) into phosphoenolpyruvate (PEP). It is essential for the degradation of carbohydrates via glycolysis. In Alcanivorax borkumensis (strain ATCC 700651 / DSM 11573 / NCIMB 13689 / SK2), this protein is Enolase.